A 612-amino-acid chain; its full sequence is Dihydroxy-acid dehydratase (612 aa).

A Mg(2+)-binding site is contributed by Asp81. Cys122 contributes to the [2Fe-2S] cluster binding site. Residues Asp123 and Lys124 each contribute to the Mg(2+) site. Lys124 is subject to N6-carboxylysine. Position 195 (Cys195) interacts with [2Fe-2S] cluster. Residue Glu491 participates in Mg(2+) binding. Catalysis depends on Ser517, which acts as the Proton acceptor.

Belongs to the IlvD/Edd family. In terms of assembly, homodimer. [2Fe-2S] cluster serves as cofactor. The cofactor is Mg(2+).

It carries out the reaction (2R)-2,3-dihydroxy-3-methylbutanoate = 3-methyl-2-oxobutanoate + H2O. It catalyses the reaction (2R,3R)-2,3-dihydroxy-3-methylpentanoate = (S)-3-methyl-2-oxopentanoate + H2O. It functions in the pathway amino-acid biosynthesis; L-isoleucine biosynthesis; L-isoleucine from 2-oxobutanoate: step 3/4. Its pathway is amino-acid biosynthesis; L-valine biosynthesis; L-valine from pyruvate: step 3/4. Functionally, functions in the biosynthesis of branched-chain amino acids. Catalyzes the dehydration of (2R,3R)-2,3-dihydroxy-3-methylpentanoate (2,3-dihydroxy-3-methylvalerate) into 2-oxo-3-methylpentanoate (2-oxo-3-methylvalerate) and of (2R)-2,3-dihydroxy-3-methylbutanoate (2,3-dihydroxyisovalerate) into 2-oxo-3-methylbutanoate (2-oxoisovalerate), the penultimate precursor to L-isoleucine and L-valine, respectively. In Haemophilus influenzae (strain 86-028NP), this protein is Dihydroxy-acid dehydratase.